Reading from the N-terminus, the 233-residue chain is Zein-alpha PMS2 (233 aa).

The signal sequence occupies residues 1–21 (MAAKIFCFLMLLGLSASVATA).

Belongs to the zein family.

In terms of biological role, zeins are major seed storage proteins. The polypeptide is Zein-alpha PMS2 (ZMPMS2) (Zea mays (Maize)).